The following is a 300-amino-acid chain: Eukaryotic translation initiation factor 3 subunit F (300 aa).

In terms of domain architecture, MPN spans 33–169 (VKVHPVALFS…VQCYVSALLG (137 aa)).

This sequence belongs to the eIF-3 subunit F family. In terms of assembly, component of the eukaryotic translation initiation factor 3 (eIF-3) complex.

The protein resides in the cytoplasm. In terms of biological role, component of the eukaryotic translation initiation factor 3 (eIF-3) complex, which is involved in protein synthesis of a specialized repertoire of mRNAs and, together with other initiation factors, stimulates binding of mRNA and methionyl-tRNAi to the 40S ribosome. The eIF-3 complex specifically targets and initiates translation of a subset of mRNAs involved in cell proliferation. This is Eukaryotic translation initiation factor 3 subunit F from Malassezia globosa (strain ATCC MYA-4612 / CBS 7966) (Dandruff-associated fungus).